The chain runs to 366 residues: tRNA/tmRNA (uracil-C(5))-methyltransferase (366 aa).

Q190, Y218, N223, E239, and D299 together coordinate S-adenosyl-L-methionine. The active-site Nucleophile is the C324. E358 serves as the catalytic Proton acceptor.

It belongs to the class I-like SAM-binding methyltransferase superfamily. RNA M5U methyltransferase family. TrmA subfamily.

The catalysed reaction is uridine(54) in tRNA + S-adenosyl-L-methionine = 5-methyluridine(54) in tRNA + S-adenosyl-L-homocysteine + H(+). It catalyses the reaction uridine(341) in tmRNA + S-adenosyl-L-methionine = 5-methyluridine(341) in tmRNA + S-adenosyl-L-homocysteine + H(+). In terms of biological role, dual-specificity methyltransferase that catalyzes the formation of 5-methyluridine at position 54 (m5U54) in all tRNAs, and that of position 341 (m5U341) in tmRNA (transfer-mRNA). This chain is tRNA/tmRNA (uracil-C(5))-methyltransferase, found in Shigella boydii serotype 18 (strain CDC 3083-94 / BS512).